An 82-amino-acid polypeptide reads, in one-letter code: Small ribosomal subunit protein bS16 (82 aa).

It belongs to the bacterial ribosomal protein bS16 family.

The protein is Small ribosomal subunit protein bS16 of Sodalis glossinidius (strain morsitans).